The primary structure comprises 388 residues: MRYLTAGESHGLSLTAIIEGIPAGLTLHPADIDHELQRRQGGYGRGTRMSIETDRVQISSGVRHGKTTGAPITLTVINKDHQKWLDVMAVGDIEETLKLKRRVKHPRPGHADLVGGIKYHFNDLRDALERSSARETTMRVAVGAVAKRILAELGIDMLHHILIFGGITITIPSKLSFRELQERALHSELSIVNPKQEEEIKTYIDKIKKEGDTIGGIIETIVQGVPAGLGSYVQWDKKLDAKLAQAVLSINAFKGVEFGVGFDMGFQKGSQVMDEITWTPTQGYGRQTNHLGGFEGGMTTGQPLVVKGVMKPIPTLYKPLMSVDIDSHEPYKATVERSDPTALPAAGVIMENVVATVLAKEILETFSSTTMSELQKAFSDYRAYVKQF.

Positions 39 and 45 each coordinate NADP(+). Residues 130–132 (RSS), 251–252 (NA), G296, 311–315 (KPIPT), and R337 contribute to the FMN site.

It belongs to the chorismate synthase family. As to quaternary structure, homotetramer. The cofactor is FMNH2.

The enzyme catalyses 5-O-(1-carboxyvinyl)-3-phosphoshikimate = chorismate + phosphate. It participates in metabolic intermediate biosynthesis; chorismate biosynthesis; chorismate from D-erythrose 4-phosphate and phosphoenolpyruvate: step 7/7. Catalyzes the anti-1,4-elimination of the C-3 phosphate and the C-6 proR hydrogen from 5-enolpyruvylshikimate-3-phosphate (EPSP) to yield chorismate, which is the branch point compound that serves as the starting substrate for the three terminal pathways of aromatic amino acid biosynthesis. This reaction introduces a second double bond into the aromatic ring system. The polypeptide is Chorismate synthase (Streptococcus pyogenes serotype M5 (strain Manfredo)).